Here is a 578-residue protein sequence, read N- to C-terminus: MKFSNITIKNFRNFEKVNINLDNKNVIFGMNDIGKTNFLYALRFLLDKEIRKFGFNKSDYHKHDTSKKIEIILTLDLSNYEKDEDTKKLISVVKGARTSANADVFYIALESKYDDKELYGNIILKWGSELDNLIDIPGRGNINALDNVFKVIYINPLVDLDKLFAQNKKYIFEESQGNESDEGILNNIKSLTDQVNQQIGEMTIIKGFQQEITSEYRSLKKEEVSIELKSEMAIKGFFSDIIPYIKKDGDSNYYPTSGDGRRKMLSYSIYNYLAKKKYEDKIVIYLIEEPEISLHRSMQIALSKQLFEQSTYKYFFLSTHSPELLYEMDNTRLIRVHSTEKVVCSSHMYNVEEAYGSVKKKLNKALSSALFAERVLLIEGPSEKILFEKVLDEVEPEYELNGGFLLEVGGTYFNHYVCTLNDLGITHIIKTDNDLKSKKGKKGVYELLGLNRCLNLLGRENLDEITIDIPEDIKGKKKKERLNERKKEIFKQYKNEVGEFLGERIYLSEIDLENDLYSAIGESMKRIFENEDPVHYLQKSKLFNMVELVNNLSTKDCFDVFEHEKFACLKELVGSDRG.

Positions Met1–Lys341 are ATPase domain. Residue Asp32–Thr36 coordinates ATP. Residues Leu370–Ile510 are toprim domain. A divalent metal cation-binding residues include Glu379, Glu383, Asp463, Glu464, and Glu513.

As to quaternary structure, homotetramer. Forms the core of the anti-phage defense complex. Interacts with GajB; 2 GajB dimers dock at opposite sides of the GajA complex to form a 4:4 GajA-GajB assembly (GajAB). GajAB interacts with Bacillus phage Phi3T Gad1 protein; this interaction forms a 4:4:8 GajAB-Gad1 complex and leads to GajAB inhibition. Mg(2+) is required as a cofactor. It depends on Mn(2+) as a cofactor.

Its activity is regulated as follows. Endonuclease activity inhibited by all NTPs, dNTPs, NDPs (at 0.5 mM, UDP not tested) and AMP-PNP; not inhibited by any tested NMP, dNMP or nucleoside. Inhibited by 100 mM NaCl, 100 mM KCl, 0.5 mM Co(2+) and 0.5 mM Ni(2+). Component of antiviral defense system Gabija type I, composed of GajA and GajB. Endonuclease that nicks double-stranded DNA within the sequence 5'-TNNNCGGGNNA-3' in the absence of nucleotides (NTP, dNTP and NDPs), cleaving after C-1. Has no detected ATPase activity. Expression of Gabija type I in B.subtilis (strain BEST7003) confers resistance to phages phi105, phi29, rho14, SpBeta and SBSphiC. Expression of Gabija type I in E.coli B (strain ATCC 11303) confers resistance to phage T7. It is thought that this enzyme is strongly suppressed during physiological growth (in E.coli total nucleotide concentration is over 8.7 mM in mid-log phase), but during viral replication, when nucleotides are rapidly consumed, it is de-suppressed and degrades target DNA. The polypeptide is Endonuclease GajA (Bacillus cereus (strain VD045)).